The chain runs to 379 residues: Phospholipase A1 (379 aa).

An N-terminal signal peptide occupies residues 1 to 20 (MKFITAILVIFCVYLLSTAG). The propeptide occupies 21–73 (DSKILPLKKLPSKIFGHLKSHVDNTVKKPLKVFGHLKSHVENSVGPLRMNKLT). A disulfide bridge links cysteine 76 with cysteine 154. An N-linked (GlcNAc...) asparagine glycan is attached at asparagine 126. The Nucleophile role is filled by serine 204. Aspartate 232 acts as the Charge relay system in catalysis. 2 disulfide bridges follow: cysteine 243/cysteine 248 and cysteine 285/cysteine 291. The active-site Charge relay system is histidine 293.

This sequence belongs to the AB hydrolase superfamily. Lipase family. Post-translationally, contains five disulfide bonds. In terms of tissue distribution, expressed by the venom gland.

Its subcellular location is the secreted. The catalysed reaction is a 1,2-diacyl-sn-glycero-3-phosphocholine + H2O = a 2-acyl-sn-glycero-3-phosphocholine + a fatty acid + H(+). In terms of biological role, catalyzes the hydrolysis of phosphatidylcholine with phospholipase A1 activity. May act as an allergen and induce hemolytic activity. In Dinoponera quadriceps (South American ant), this protein is Phospholipase A1.